The following is a 273-amino-acid chain: Ribosomal RNA small subunit methyltransferase A (273 aa).

Positions 18, 20, 45, 66, 91, and 113 each coordinate S-adenosyl-L-methionine.

This sequence belongs to the class I-like SAM-binding methyltransferase superfamily. rRNA adenine N(6)-methyltransferase family. RsmA subfamily.

The protein localises to the cytoplasm. It catalyses the reaction adenosine(1518)/adenosine(1519) in 16S rRNA + 4 S-adenosyl-L-methionine = N(6)-dimethyladenosine(1518)/N(6)-dimethyladenosine(1519) in 16S rRNA + 4 S-adenosyl-L-homocysteine + 4 H(+). Functionally, specifically dimethylates two adjacent adenosines (A1518 and A1519) in the loop of a conserved hairpin near the 3'-end of 16S rRNA in the 30S particle. May play a critical role in biogenesis of 30S subunits. The sequence is that of Ribosomal RNA small subunit methyltransferase A from Salmonella choleraesuis (strain SC-B67).